The sequence spans 277 residues: Sulfur carrier protein FdhD (277 aa).

The active-site Cysteine persulfide intermediate is Cys121. Mo-bis(molybdopterin guanine dinucleotide) is bound at residue 260 to 265 (FCKPGR).

This sequence belongs to the FdhD family.

Its subcellular location is the cytoplasm. In terms of biological role, required for formate dehydrogenase (FDH) activity. Acts as a sulfur carrier protein that transfers sulfur from IscS to the molybdenum cofactor prior to its insertion into FDH. This is Sulfur carrier protein FdhD from Escherichia coli O6:K15:H31 (strain 536 / UPEC).